Here is a 328-residue protein sequence, read N- to C-terminus: DNA polymerase III subunit delta' (328 aa).

DNA polymerase III contains a core (composed of alpha, epsilon and theta chains) that associates with a tau subunit. This core dimerizes to form the POLIII' complex. PolIII' associates with the gamma complex (composed of gamma, delta, delta', psi and chi chains) and with the beta chain to form the complete DNA polymerase III complex.

The catalysed reaction is DNA(n) + a 2'-deoxyribonucleoside 5'-triphosphate = DNA(n+1) + diphosphate. Functionally, DNA polymerase III is a complex, multichain enzyme responsible for most of the replicative synthesis in bacteria. This DNA polymerase also exhibits 3' to 5' exonuclease activity. The protein is DNA polymerase III subunit delta' (holB) of Buchnera aphidicola subsp. Schizaphis graminum (strain Sg).